Reading from the N-terminus, the 43-residue chain is uncharacterized protein (43 aa).

This is an uncharacterized protein from Rickettsia prowazekii (strain Madrid E).